The chain runs to 384 residues: Heparin lyase I (384 aa).

Positions 1 to 21 are cleaved as a signal peptide; that stretch reads MKKQILYLIVLQQLFLCSAYA. The residue at position 22 (Gln22) is a Blocked amino end (Gln). O-linked (Man...) serine glycosylation occurs at Ser39.

Monomer. In terms of processing, the N-terminus is blocked.

It is found in the periplasm. The enzyme catalyses Eliminative cleavage of polysaccharides containing (1-&gt;4)-linked D-glucuronate or L-iduronate residues and (1-&gt;4)-alpha-linked 2-sulfoamino-2-deoxy-6-sulfo-D-glucose residues to give oligosaccharides with terminal 4-deoxy-alpha-D-gluc-4-enuronosyl groups at their non-reducing ends.. Its function is as follows. Degrades heparin and heparan sulfate. Also implicated in the release of heparin-bound growth factors from the extracellular matrix. This chain is Heparin lyase I, found in Pedobacter heparinus (Flavobacterium heparinum).